A 305-amino-acid polypeptide reads, in one-letter code: Ornithine carbamoyltransferase, catabolic (305 aa).

Residues 50–53 (STRT), Gln-77, Arg-101, and 128–131 (HPLQ) contribute to the carbamoyl phosphate site. L-ornithine is bound by residues Asn-159, Asp-223, and 227–228 (SM). Carbamoyl phosphate contacts are provided by residues 263-264 (CL) and Arg-291.

Belongs to the aspartate/ornithine carbamoyltransferase superfamily. OTCase family.

It localises to the cytoplasm. The catalysed reaction is carbamoyl phosphate + L-ornithine = L-citrulline + phosphate + H(+). Its pathway is amino-acid degradation; L-arginine degradation via ADI pathway; carbamoyl phosphate from L-arginine: step 2/2. Reversibly catalyzes the transfer of the carbamoyl group from carbamoyl phosphate (CP) to the N(epsilon) atom of ornithine (ORN) to produce L-citrulline. The sequence is that of Ornithine carbamoyltransferase, catabolic from Thermoplasma acidophilum (strain ATCC 25905 / DSM 1728 / JCM 9062 / NBRC 15155 / AMRC-C165).